Consider the following 102-residue polypeptide: Circadian clock oscillator protein KaiB (102 aa).

This sequence belongs to the KaiB family. In terms of assembly, undergoes a major conformational rearrangment; in the free state forms homotetramers with 2 dimers. When bound to the CI domain of KaiC switches to a monomeric thioredoxin-fold (KaiB(fs)). Monomers, homodimers and homotetramers are detected in solution; at low concentrations only monomers are seen. In vitro forms KaiC(6):KaiB(1) and KaiC(6):KaiB(6) complexes. Only associates with 'Ser-431'-phosphorylated KaiC (and not with doubly phosphorylated KaiC). Complex formation between KaiB and KaiC is regulated by the phosphorylation state of KaiC and by an ATP hydrolysis-driven conformation change in the CI ring of KaiC; complex formation is slow. Slow complex formation is crucial for the timing of the circadian period. In low resolution cryo-EM forms a KaiC(6):KaiB(6) complex. The KaiABC complex composition changes during the circadian cycle to control KaiC phosphorylation. Complexes KaiC(6), KaiA(2-4):KaiC(6), KaiB(6):KaiC(6) and KaiC(6):KaiB(6):KaiA(12) are among the most important forms, many form cooperatively. The KaiB:KaiC complex is more prevalent at 16 hours (in the dark) than at 4 hours (in the light) in the circadian cycle. The KaiA:KaiB complex is only found at 20-24 hours in the circadian cycle (subjective night). Binds to the CI domain of KaiC; SasA and KaiB compete to bind to the CI domain.

It is found in the cytoplasm. Its subcellular location is the cell membrane. Its function is as follows. Key component of the KaiABC oscillator complex, which constitutes the main circadian regulator in cyanobacteria. Complex composition changes during the circadian cycle to control KaiC phosphorylation. KaiA stimulates KaiC autophosphorylation, while KaiB sequesters KaiA, leading to KaiC autodephosphorylation. KaiA binding to the KaiC CII domain yields KaiA(2-4):KaiC(6) complexes which stimulate KaiC autophosphorylation. Phospho-Ser-431 KaiC accumulation triggers binding of KaiB to form the KaiB(6):KaiC(6) complex, leading to changes in the output regulators CikA and SasA. KaiB switches to a thioredoxin-like fold (KaiB(fs)) in complex with KaiC. KaiB(6):KaiC(6) formation exposes a site for KaiA binding that sequesters KaiA from the CII domain, making the KaiC(6):KaiB(6):KaiA(12) complex that results in KaiC autodephosphorylation. Complete dephosphorylation of KaiC leads to dissociation of KaiA(2):KaiB(1), completing 1 cycle of the Kai oscillator. Functionally, circadian oscillations can be generated in vitro by incubating KaiA, KaiB and KaiC with 1 mM ATP. The cycle is self-sustainable for at least 3 cycles and resistant to temperature changes. A very robust clock is reconstituted with KaiA, KaiB, KaiC, SasA, CikA and RpaA; output is measured by transcription from an appropriate reporter. A metamorphic protein which reversibly switches between an inactive tetrameric fold and a rare, thioredoxin-like monomeric fold (KaiB(fs)). KaiB(fs) binds phospho-KaiC, KaiA and CikA. KaiA and CikA compete for binding to KaiB(fs), and KaiB(fs) and SasA compete for binding to KaiC, thus the clock oscillator and output signal pathway are tightly coupled. The sequence is that of Circadian clock oscillator protein KaiB from Synechococcus elongatus (strain ATCC 33912 / PCC 7942 / FACHB-805) (Anacystis nidulans R2).